Reading from the N-terminus, the 238-residue chain is Complement C1q-like protein 4 (238 aa).

An N-terminal signal peptide occupies residues 1–15 (MVLLLLVAIPLLVHS). The disordered stretch occupies residues 36-101 (GPRGPGPDGA…PPGPGPGGVA (66 aa)). One can recognise a Collagen-like domain in the interval 53 to 96 (PPGAKGEVGRRGKAGLRGPPGPPGPRGPPGEPGRPGPPGPPGPG). Residues 71 to 96 (PPGPPGPRGPPGEPGRPGPPGPPGPG) show a composition bias toward pro residues. The region spanning 105–238 (GYVPRIAFYA…TFSGFIIYPD (134 aa)) is the C1q domain.

In terms of assembly, forms homooligomers, predominantly dimers or trimers. Forms heterooligomers with C1QL1, C1QL2 and C1QL3, when proteins are coexpressed; this interaction does not occur after secretion. Interacts with ADGRB3. In terms of tissue distribution, highest expression levels in testis and adipose tissue, lower levels in skeletal muscle and kidney.

The protein localises to the secreted. May regulate the number of excitatory synapses that are formed on hippocampus neurons. Has no effect on inhibitory synapses. May inhibit adipocyte differentiation at an early stage of the process. This chain is Complement C1q-like protein 4 (C1QL4), found in Homo sapiens (Human).